The primary structure comprises 422 residues: Target of rapamycin complex 2 subunit bit61 (422 aa).

The span at 48–69 (VTTKESNVGDSDTTENIKSPFN) shows a compositional bias: polar residues. Positions 48–101 (VTTKESNVGDSDTTENIKSPFNGQWPFSRRSSQSSSHPVFEETHWSKHSKRPGK) are disordered. Residues Ser-109, Ser-132, and Ser-201 each carry the phosphoserine modification.

The protein belongs to the BIT61 family. As to quaternary structure, the target of rapamycin complex 2 (TORC2) is composed of at least bit61, pop3/wat1, sin1, ste20 and tor1. Either Thr-23, Thr-25 or Ser-26 and Ser-78 or Ser-79 are phosphorylated as well.

It localises to the cytoplasm. The protein localises to the nucleus. Its function is as follows. Component of TORC2, which regulates multiple cellular processes to control cell growth in response to environmental signals. TORC2 is required for cell survival under various stress conditions. TORC2 positively controls G1 cell-cycle arrest, sexual development and amino acid uptake. Positively regulates amino acid uptake through the control of expression of amino acid permeases. The sequence is that of Target of rapamycin complex 2 subunit bit61 from Schizosaccharomyces pombe (strain 972 / ATCC 24843) (Fission yeast).